The primary structure comprises 599 residues: Elongation factor 4 (599 aa).

The region spanning K2 to E184 is the tr-type G domain. GTP-binding positions include D14–T19 and N131–D134.

It belongs to the TRAFAC class translation factor GTPase superfamily. Classic translation factor GTPase family. LepA subfamily.

It localises to the cell inner membrane. The catalysed reaction is GTP + H2O = GDP + phosphate + H(+). In terms of biological role, required for accurate and efficient protein synthesis under certain stress conditions. May act as a fidelity factor of the translation reaction, by catalyzing a one-codon backward translocation of tRNAs on improperly translocated ribosomes. Back-translocation proceeds from a post-translocation (POST) complex to a pre-translocation (PRE) complex, thus giving elongation factor G a second chance to translocate the tRNAs correctly. Binds to ribosomes in a GTP-dependent manner. This chain is Elongation factor 4, found in Klebsiella pneumoniae subsp. pneumoniae (strain ATCC 700721 / MGH 78578).